A 928-amino-acid chain; its full sequence is Kinesin heavy chain (928 aa).

One can recognise a Kinesin motor domain in the interval Ser-7–Ile-330. Residues Gly-88 to Ser-95 and Gly-238 to Thr-245 each bind ATP. A coiled-coil region spans residues Ala-343–Ala-866. Positions Ser-395–Arg-409 are enriched in low complexity. Disordered regions lie at residues Ser-395–Lys-434 and Gly-893–Ser-928. Polar residues predominate over residues Asn-905–Ser-928.

This sequence belongs to the TRAFAC class myosin-kinesin ATPase superfamily. Kinesin family. Kinesin subfamily.

The protein resides in the cytoplasm. It is found in the cytoskeleton. Functionally, kinesin is a microtubule-associated force-producing protein that may play a role in organelle transport. Its motor activity is directed toward the microtubule's plus end. This Neurospora crassa (strain ATCC 24698 / 74-OR23-1A / CBS 708.71 / DSM 1257 / FGSC 987) protein is Kinesin heavy chain (kin).